The primary structure comprises 1342 residues: DNA-directed RNA polymerase subunit beta (1342 aa).

It belongs to the RNA polymerase beta chain family. As to quaternary structure, the RNAP catalytic core consists of 2 alpha, 1 beta, 1 beta' and 1 omega subunit. When a sigma factor is associated with the core the holoenzyme is formed, which can initiate transcription.

It carries out the reaction RNA(n) + a ribonucleoside 5'-triphosphate = RNA(n+1) + diphosphate. Its function is as follows. DNA-dependent RNA polymerase catalyzes the transcription of DNA into RNA using the four ribonucleoside triphosphates as substrates. The sequence is that of DNA-directed RNA polymerase subunit beta from Blochmanniella floridana.